The sequence spans 384 residues: Alpha-2B adrenergic receptor (384 aa).

Residues 1–25 (AIAAVTTFLILFTVFGNALVILAVL) traverse the membrane as a helical segment. The Cytoplasmic portion of the chain corresponds to 26-36 (TSRSLRAPQNL). The helical transmembrane segment at 37–62 (FLVSLAAADILVATLIXPFSLANELL) threads the bilayer. The Extracellular portion of the chain corresponds to 63 to 72 (GYWYFWHTWC). The cysteines at positions 72 and 151 are disulfide-linked. The helical transmembrane segment at 73-95 (EVYLALXVLXCTSSIVHLCAISL) threads the bilayer. Residues 96-117 (DRYWAVSRALEYNSKRTPRRIX) lie on the Cytoplasmic side of the membrane. A helical membrane pass occupies residues 118–140 (GIILTVWLIAAAISLPPLIYKGD). Over 141–156 (QGPQPHGRPQCRLNQE) the chain is Extracellular. The chain crosses the membrane as a helical span at residues 157–180 (AWYILSSSIGSFFAPCLIMILVYL). At 181–348 (RIYLIAKRRN…LTREKRFTFV (168 aa)) the chain is on the cytoplasmic side. The tract at residues 193 to 306 (GPRAQGASKG…SXGSPQLQQP (114 aa)) is disordered. The segment covering 288 to 306 (PEALPASPASXGSPQLQQP) has biased composition (low complexity). Residues 349–372 (LAVVIGVXVLCWFPFFXSYSLGAI) traverse the membrane as a helical segment. Topologically, residues 373-381 (CPQHCTVXH) are extracellular. The helical transmembrane segment at 382–384 (GLF) threads the bilayer.

Belongs to the G-protein coupled receptor 1 family. Adrenergic receptor subfamily. ADRA2B sub-subfamily. Interacts with RAB26. Interacts with PPP1R9B. Interacts with GGA1, GGA2 and GGA3.

Its subcellular location is the cell membrane. In terms of biological role, alpha-2 adrenergic receptors mediate the catecholamine-induced inhibition of adenylate cyclase through the action of G proteins. In Echinops telfairi (Lesser hedgehog tenrec), this protein is Alpha-2B adrenergic receptor (ADRA2B).